The following is an 804-amino-acid chain: Protein translocase subunit SecA (804 aa).

Residues glutamine 100, 118–122 (GEGKT), and aspartate 508 each bind ATP.

This sequence belongs to the SecA family. As to quaternary structure, monomer and homodimer. Part of the essential Sec protein translocation apparatus which comprises SecA, SecYEG and auxiliary proteins SecDF. Other proteins may also be involved.

Its subcellular location is the cell membrane. It is found in the cytoplasm. The catalysed reaction is ATP + H2O + cellular proteinSide 1 = ADP + phosphate + cellular proteinSide 2.. Functionally, part of the Sec protein translocase complex. Interacts with the SecYEG preprotein conducting channel. Has a central role in coupling the hydrolysis of ATP to the transfer of proteins into and across the cell membrane, serving as an ATP-driven molecular motor driving the stepwise translocation of polypeptide chains across the membrane. The protein is Protein translocase subunit SecA of Leuconostoc citreum (strain KM20).